The chain runs to 275 residues: 2,3,4,5-tetrahydropyridine-2,6-dicarboxylate N-succinyltransferase (275 aa).

This sequence belongs to the transferase hexapeptide repeat family.

It localises to the cytoplasm. It catalyses the reaction (S)-2,3,4,5-tetrahydrodipicolinate + succinyl-CoA + H2O = (S)-2-succinylamino-6-oxoheptanedioate + CoA. Its pathway is amino-acid biosynthesis; L-lysine biosynthesis via DAP pathway; LL-2,6-diaminopimelate from (S)-tetrahydrodipicolinate (succinylase route): step 1/3. This is 2,3,4,5-tetrahydropyridine-2,6-dicarboxylate N-succinyltransferase from Paraburkholderia phymatum (strain DSM 17167 / CIP 108236 / LMG 21445 / STM815) (Burkholderia phymatum).